Consider the following 254-residue polypeptide: Serine acetyltransferase (254 aa).

Belongs to the transferase hexapeptide repeat family.

The protein localises to the cytoplasm. The catalysed reaction is L-serine + acetyl-CoA = O-acetyl-L-serine + CoA. Its pathway is amino-acid biosynthesis; L-cysteine biosynthesis; L-cysteine from L-serine: step 1/2. In Buchnera aphidicola subsp. Baizongia pistaciae (strain Bp), this protein is Serine acetyltransferase (cysE).